The chain runs to 101 residues: UPF0473 protein spr0177 (101 aa).

This sequence belongs to the UPF0473 family.

This chain is UPF0473 protein spr0177, found in Streptococcus pneumoniae (strain ATCC BAA-255 / R6).